The sequence spans 367 residues: Chorismate synthase (367 aa).

Positions 39-60 (EEFSHDLQRRASGKSRHTSARR) are disordered. Positions 48 and 54 each coordinate NADP(+). FMN is bound by residues 125–127 (RSS), 238–239 (NA), Gly278, 293–297 (KPTSS), and Arg319.

The protein belongs to the chorismate synthase family. In terms of assembly, homotetramer. FMNH2 serves as cofactor.

The catalysed reaction is 5-O-(1-carboxyvinyl)-3-phosphoshikimate = chorismate + phosphate. It functions in the pathway metabolic intermediate biosynthesis; chorismate biosynthesis; chorismate from D-erythrose 4-phosphate and phosphoenolpyruvate: step 7/7. In terms of biological role, catalyzes the anti-1,4-elimination of the C-3 phosphate and the C-6 proR hydrogen from 5-enolpyruvylshikimate-3-phosphate (EPSP) to yield chorismate, which is the branch point compound that serves as the starting substrate for the three terminal pathways of aromatic amino acid biosynthesis. This reaction introduces a second double bond into the aromatic ring system. The sequence is that of Chorismate synthase from Xanthomonas oryzae pv. oryzae (strain MAFF 311018).